Consider the following 186-residue polypeptide: C-type lectin 37Da (186 aa).

The first 20 residues, 1–20, serve as a signal peptide directing secretion; sequence MLKTLVQLFLVVAGFAPGFG. Residues Asn35 and Asn47 are each glycosylated (N-linked (GlcNAc...) asparagine). Residues 46 to 169 enclose the C-type lectin domain; the sequence is INESYYVFGQ…CHNHASSLFK (124 aa). Cys140 and Cys160 are joined by a disulfide.

The protein localises to the secreted. Its function is as follows. Galactose-specific lectin that displays calcium-dependent activity. Binds to the surface of hemocytes and enhances hemocyte encapsulation and melanization. This is likely by interacting with carbohydrates on the surface of the hemocytes. Also displays agglutination activity against the Gram-negative bacterium E.coli. The chain is C-type lectin 37Da from Drosophila melanogaster (Fruit fly).